A 452-amino-acid chain; its full sequence is Pup--protein ligase (452 aa).

Residue glutamate 9 participates in Mg(2+) binding. Arginine 53 is an ATP binding site. Tyrosine 55 lines the Mg(2+) pocket. The active-site Proton acceptor is the aspartate 57. Mg(2+) is bound at residue glutamate 63. Residues threonine 66 and tryptophan 419 each coordinate ATP.

Belongs to the Pup ligase/Pup deamidase family. Pup-conjugating enzyme subfamily.

The catalysed reaction is ATP + [prokaryotic ubiquitin-like protein]-L-glutamate + [protein]-L-lysine = ADP + phosphate + N(6)-([prokaryotic ubiquitin-like protein]-gamma-L-glutamyl)-[protein]-L-lysine.. Its pathway is protein degradation; proteasomal Pup-dependent pathway. The protein operates within protein modification; protein pupylation. In terms of biological role, catalyzes the covalent attachment of the prokaryotic ubiquitin-like protein modifier Pup to the proteasomal substrate proteins, thereby targeting them for proteasomal degradation. This tagging system is termed pupylation. The ligation reaction involves the side-chain carboxylate of the C-terminal glutamate of Pup and the side-chain amino group of a substrate lysine. The polypeptide is Pup--protein ligase (Mycobacterium ulcerans (strain Agy99)).